We begin with the raw amino-acid sequence, 332 residues long: Probable class II chitinase ARB_00204 (332 aa).

The first 18 residues, 1-18 (MKTPFTILAALTVATTLA), serve as a signal peptide directing secretion. The 313-residue stretch at 19-331 (DVPDEWDIIE…NPHRKYLDSF (313 aa)) folds into the GH18 domain. Residue Glu118 is the Proton donor of the active site. Residue Asn245 is glycosylated (N-linked (GlcNAc...) asparagine).

Belongs to the glycosyl hydrolase 18 family. Chitinase class II subfamily.

The protein localises to the secreted. The enzyme catalyses Random endo-hydrolysis of N-acetyl-beta-D-glucosaminide (1-&gt;4)-beta-linkages in chitin and chitodextrins.. Its function is as follows. Degrades chitin and chitotriose. This chain is Probable class II chitinase ARB_00204, found in Arthroderma benhamiae (strain ATCC MYA-4681 / CBS 112371) (Trichophyton mentagrophytes).